A 1367-amino-acid polypeptide reads, in one-letter code: Tonsoku-like protein (1367 aa).

9 TPR repeats span residues 27-60 (AVCC…LESV), 67-100 (AVAH…AGSL), 107-147 (QRAW…VDEK), 162-195 (TRLY…AEQN), 202-235 (FRAR…ARAM), 242-275 (SECC…GSQK), 311-344 (MAIC…AELL), 352-385 (AVIH…RKGN), and 390-424 (AKTW…AQQA). Residues 460-509 (SMAKDTEEEEEEEEEEEEEASEALETSEMELSESEDDADGLSQQLEEEEE) are disordered. Acidic residues predominate over residues 465–509 (TEEEEEEEEEEEEEASEALETSEMELSESEDDADGLSQQLEEEEE). ANK repeat units lie at residues 528–557 (MGET…PLNP), 561–590 (CGWT…AVDD), and 597–626 (DGIT…SVTL). 2 disordered regions span residues 660-714 (MERR…EASP) and 726-785 (SAVC…TAIS). Polar residues predominate over residues 666–684 (MASSGQASHSSPALQTIPN). Over residues 692 to 713 (TSPPSSPCPKPPSYTPRPPEAS) the composition is skewed to pro residues. Basic and acidic residues predominate over residues 772-781 (KTPDPSKSRE). An Omega-N-methylarginine modification is found at R797. Disordered regions lie at residues 798–820 (GVGS…EVPA) and 841–910 (TPLT…GPNK). Positions 844 to 857 (TRSSSSSRPSTSIS) are enriched in low complexity. Polar residues predominate over residues 894–909 (AEPTENSSMPRTTGPN). LRR repeat units lie at residues 1062–1086 (HTAL…LLAT), 1090–1118 (MPNL…SLGQ), 1121–1144 (FQNV…ALAS), 1181–1205 (AEHL…VLQS), 1240–1263 (GCAL…ELSR), 1268–1293 (CPSL…LLSA), and 1324–1347 (LSQL…TLCQ).

The protein belongs to the Tonsoku family. Component of the MMS22L-TONSL complex, a complex at least composed of MMS22L and TONSL/NFKBIL2. Interacts with the MCM complex, the FACT complex and the RPA complex. Interacts with MCM5; the interaction is direct. Binds histones, with a strong preference for histone H3.1 (histones H3.1 and H3-4/H3.1t). Interacts (via ANK repeats) with histone H4; specifically binds histone H4 lacking methylation at 'Lys-20' (H4K20me0). May interact with DNAJC9; the interaction seems to be histone-dependent.

It is found in the nucleus. The protein resides in the chromosome. Its subcellular location is the cytoplasm. Its function is as follows. Component of the MMS22L-TONSL complex, a complex that promotes homologous recombination-mediated repair of double-strand breaks (DSBs) at stalled or collapsed replication forks. The MMS22L-TONSL complex is required to maintain genome integrity during DNA replication. It mediates the assembly of RAD51 filaments on single-stranded DNA (ssDNA): the MMS22L-TONSL complex is recruited to DSBs following histone replacement by histone chaperones and eviction of the replication protein A complex (RPA/RP-A) from DSBs. Following recruitment to DSBs, the TONSL-MMS22L complex promotes recruitment of RAD51 filaments and subsequent homologous recombination. Within the complex, TONSL acts as a histone reader, which recognizes and binds newly synthesized histones following their replacement by histone chaperones. Specifically binds histone H4 lacking methylation at 'Lys-20' (H4K20me0) and histone H3.1. This chain is Tonsoku-like protein, found in Rattus norvegicus (Rat).